The sequence spans 58 residues: Ribosome modulation factor (58 aa).

The segment at 1-28 is disordered; sequence MKRQKRDRFERAHTQGFKAGLHGRSKDN.

Belongs to the ribosome modulation factor family.

It localises to the cytoplasm. In terms of biological role, during stationary phase, converts 70S ribosomes to an inactive dimeric form (100S ribosomes). In Idiomarina loihiensis (strain ATCC BAA-735 / DSM 15497 / L2-TR), this protein is Ribosome modulation factor.